The chain runs to 404 residues: Cysteine desulfurase IscS (404 aa).

Pyridoxal 5'-phosphate contacts are provided by residues 75 to 76 (AT), asparagine 155, glutamine 183, and 203 to 205 (SGH). At lysine 206 the chain carries N6-(pyridoxal phosphate)lysine. Pyridoxal 5'-phosphate is bound at residue threonine 243. Cysteine 328 (cysteine persulfide intermediate) is an active-site residue. A [2Fe-2S] cluster-binding site is contributed by cysteine 328.

This sequence belongs to the class-V pyridoxal-phosphate-dependent aminotransferase family. NifS/IscS subfamily. Homodimer. Forms a heterotetramer with IscU, interacts with other sulfur acceptors. It depends on pyridoxal 5'-phosphate as a cofactor.

It localises to the cytoplasm. The catalysed reaction is (sulfur carrier)-H + L-cysteine = (sulfur carrier)-SH + L-alanine. Its pathway is cofactor biosynthesis; iron-sulfur cluster biosynthesis. In terms of biological role, master enzyme that delivers sulfur to a number of partners involved in Fe-S cluster assembly, tRNA modification or cofactor biosynthesis. Catalyzes the removal of elemental sulfur atoms from cysteine to produce alanine. Functions as a sulfur delivery protein for Fe-S cluster synthesis onto IscU, an Fe-S scaffold assembly protein, as well as other S acceptor proteins. This is Cysteine desulfurase IscS from Shewanella pealeana (strain ATCC 700345 / ANG-SQ1).